Reading from the N-terminus, the 472-residue chain is Siroheme synthase 1 (472 aa).

The tract at residues 1 to 203 (MDYLPLFADL…GQLTEAENEL (203 aa)) is precorrin-2 dehydrogenase /sirohydrochlorin ferrochelatase. Residues 22–23 (EV) and 43–44 (QT) each bind NAD(+). At serine 128 the chain carries Phosphoserine. Residues 215–472 (GEVALVGAGP…AISPSVVNLA (258 aa)) are uroporphyrinogen-III C-methyltransferase. Proline 224 serves as a coordination point for S-adenosyl-L-methionine. The Proton acceptor role is filled by aspartate 247. The Proton donor role is filled by lysine 269. S-adenosyl-L-methionine contacts are provided by residues 300-302 (GGD), isoleucine 305, 330-331 (TA), methionine 382, and glycine 411.

This sequence in the N-terminal section; belongs to the precorrin-2 dehydrogenase / sirohydrochlorin ferrochelatase family. The protein in the C-terminal section; belongs to the precorrin methyltransferase family.

The catalysed reaction is uroporphyrinogen III + 2 S-adenosyl-L-methionine = precorrin-2 + 2 S-adenosyl-L-homocysteine + H(+). It catalyses the reaction precorrin-2 + NAD(+) = sirohydrochlorin + NADH + 2 H(+). It carries out the reaction siroheme + 2 H(+) = sirohydrochlorin + Fe(2+). It functions in the pathway cofactor biosynthesis; adenosylcobalamin biosynthesis; precorrin-2 from uroporphyrinogen III: step 1/1. Its pathway is cofactor biosynthesis; adenosylcobalamin biosynthesis; sirohydrochlorin from precorrin-2: step 1/1. The protein operates within porphyrin-containing compound metabolism; siroheme biosynthesis; precorrin-2 from uroporphyrinogen III: step 1/1. It participates in porphyrin-containing compound metabolism; siroheme biosynthesis; siroheme from sirohydrochlorin: step 1/1. It functions in the pathway porphyrin-containing compound metabolism; siroheme biosynthesis; sirohydrochlorin from precorrin-2: step 1/1. Multifunctional enzyme that catalyzes the SAM-dependent methylations of uroporphyrinogen III at position C-2 and C-7 to form precorrin-2 via precorrin-1. Then it catalyzes the NAD-dependent ring dehydrogenation of precorrin-2 to yield sirohydrochlorin. Finally, it catalyzes the ferrochelation of sirohydrochlorin to yield siroheme. This Yersinia pseudotuberculosis serotype I (strain IP32953) protein is Siroheme synthase 1.